The following is a 450-amino-acid chain: UDP-N-acetylmuramoylalanine--D-glutamate ligase (450 aa).

Position 118–124 (118–124) interacts with ATP; it reads GSNGKTT.

It belongs to the MurCDEF family.

The protein resides in the cytoplasm. The catalysed reaction is UDP-N-acetyl-alpha-D-muramoyl-L-alanine + D-glutamate + ATP = UDP-N-acetyl-alpha-D-muramoyl-L-alanyl-D-glutamate + ADP + phosphate + H(+). It participates in cell wall biogenesis; peptidoglycan biosynthesis. Its function is as follows. Cell wall formation. Catalyzes the addition of glutamate to the nucleotide precursor UDP-N-acetylmuramoyl-L-alanine (UMA). The protein is UDP-N-acetylmuramoylalanine--D-glutamate ligase of Halalkalibacterium halodurans (strain ATCC BAA-125 / DSM 18197 / FERM 7344 / JCM 9153 / C-125) (Bacillus halodurans).